The sequence spans 447 residues: Putative vacuolar cation/proton exchanger 4 (447 aa).

The tract at residues 1–29 (MDKSEMDKINGTNPESTDQAPSLASRPDE) is disordered. At 1 to 65 (MDKSEMDKIN…VNWGVFGSMK (65 aa)) the chain is on the cytoplasmic side. Polar residues predominate over residues 10–22 (NGTNPESTDQAPS). Residues 66 to 86 (IVFLKSKLNVLIPCGFLAIFL) form a helical membrane-spanning segment. At 87–93 (NYMTQRY) the chain is on the extracellular side. A helical transmembrane segment spans residues 94–114 (GWVFPLSMLGIIPLAERLGFA). Topologically, residues 115-122 (TDWQISCE) are cytoplasmic. Residues 123–143 (VGRLLNSAFGNATELIISIHA) form a helical membrane-spanning segment. Residues 132–167 (GNATELIISIHALSRGKLHVVQQCLLGSILSNLLLV) are cation selection. Topologically, residues 144-159 (LSRGKLHVVQQCLLGS) are extracellular. A helical transmembrane segment spans residues 160–180 (ILSNLLLVLGSAFFSGGLACG). Topologically, residues 181 to 190 (KTMQTFSKAD) are cytoplasmic. A helical transmembrane segment spans residues 191–211 (AVVNSGLLLMAVMGLLIPAAL). Residues 212–224 (HYTHSEAQFGKSE) lie on the Extracellular side of the membrane. The chain crosses the membrane as a helical span at residues 225-245 (LALSRFSSCIMLVAYASYLYF). Topologically, residues 246-286 (QLSNNRRRNEANVYPCMPLIKRRIQDDVDGNDDEVPEISKR) are cytoplasmic. Residues 287–307 (EAISWIAIFIAWISMLSYYLV) form a helical membrane-spanning segment. Over 308–318 (DAIDGASKAWN) the chain is Extracellular. A helical transmembrane segment spans residues 319–339 (IPVAFISVVLLPVVGNSAGHA). The tract at residues 333–368 (GNSAGHANAVMFAVKDKLDISLGVAIGSSIQISMFG) is cation selection. Topologically, residues 340–353 (NAVMFAVKDKLDIS) are cytoplasmic. The chain crosses the membrane as a helical span at residues 354–374 (LGVAIGSSIQISMFGIPFCVV). Over 375 to 384 (MGWMMGKPMD) the chain is Extracellular. The chain crosses the membrane as a helical span at residues 385–405 (LNFHLFETASLLTTVLVVAFL). Topologically, residues 406–413 (LQDGTSNC) are cytoplasmic. The helical transmembrane segment at 414–434 (VKGLMLFLCYLIVAASFYVHA) threads the bilayer. At 435 to 447 (DPNSKASEKPPQN) the chain is on the extracellular side.

The protein belongs to the Ca(2+):cation antiporter (CaCA) (TC 2.A.19) family. Cation/proton exchanger (CAX) subfamily.

It localises to the vacuole membrane. Its function is as follows. Vacuolar cation/proton exchanger (CAX). Translocates Ca(2+) and other metal ions into vacuoles using the proton gradient formed by H(+)-ATPase and H(+)-pyrophosphatase. This chain is Putative vacuolar cation/proton exchanger 4, found in Oryza sativa subsp. japonica (Rice).